The sequence spans 306 residues: Glutaminase (306 aa).

Substrate is bound by residues serine 64, asparagine 115, glutamate 159, asparagine 166, tyrosine 190, tyrosine 242, and valine 260.

Belongs to the glutaminase family. Homotetramer.

It carries out the reaction L-glutamine + H2O = L-glutamate + NH4(+). The protein is Glutaminase of Vibrio vulnificus (strain YJ016).